The following is a 344-amino-acid chain: Mitochondrial substrate carrier family protein D (344 aa).

Topologically, residues 1–22 are mitochondrial intermembrane; the sequence is MDSTKTNNKWAAAGILNSVGKD. Solcar repeat units lie at residues 17 to 104, 119 to 212, and 239 to 327; these read NSVG…CQSY, IPYH…MKRK, and VPAW…TRNL. A helical membrane pass occupies residues 23–43; the sequence is FVAGSVGGMSSIMAGHPFDTI. Residues 44-75 lie on the Mitochondrial matrix side of the membrane; that stretch reads KVMLQDASGNLPKFKNGFQALKYIMKVDGIKG. A helical transmembrane segment spans residues 76-96; the sequence is IYRGLSVPLFSVSFTNSVFFA. Residues 97–116 lie on the Mitochondrial intermembrane side of the membrane; the sequence is TNNFCQSYFHPPCKDENGED. The chain crosses the membrane as a helical span at residues 117 to 137; the sequence is ILIPYHKAAAAGAIAGGVISL. Residues 138-186 lie on the Mitochondrial matrix side of the membrane; that stretch reads LITPRDLVKSKLQVQCRPFGSTNVSLQYKGPIDVIRQTIKRDGIKGMFK. The helical transmembrane segment at 187–207 threads the bilayer; that stretch reads GIRSTFCRDIPGDAVYFVVYE. Residues 208–238 lie on the Mitochondrial intermembrane side of the membrane; that stretch reads FMKRKLLALSKNNNNNNNNNDNNDNSSPKAG. The helical transmembrane segment at 239 to 259 threads the bilayer; it reads VPAWVAIGAGGCAGMSFWMSI. The Mitochondrial matrix portion of the chain corresponds to 260–301; sequence YPMDVVKTRIQTQPDHLPPQYTSVLQTITKIYREEGISVFFR. A helical membrane pass occupies residues 302–321; sequence GFSATILRAFPTSAVNFLMY. The Mitochondrial intermembrane segment spans residues 322-344; sequence ETTRNLLNSKDPFYNNNDHYNAE.

The protein belongs to the mitochondrial carrier (TC 2.A.29) family.

It localises to the mitochondrion inner membrane. In terms of biological role, calcium-dependent mitochondrial solute carrier. Mitochondrial solute carriers shuttle metabolites, nucleotides, and cofactors through the mitochondrial inner membrane. The polypeptide is Mitochondrial substrate carrier family protein D (mcfD) (Dictyostelium discoideum (Social amoeba)).